The sequence spans 240 residues: Uridylate kinase (240 aa).

Lys-13–Gly-16 is a binding site for ATP. Residue Gly-55 coordinates UMP. Residues Gly-56 and Arg-60 each coordinate ATP. Residues Asp-75 and Thr-136–Thr-143 each bind UMP. ATP contacts are provided by Thr-163, Gln-164, Tyr-169, and Asp-172.

This sequence belongs to the UMP kinase family. Homohexamer.

The protein localises to the cytoplasm. It carries out the reaction UMP + ATP = UDP + ADP. It participates in pyrimidine metabolism; CTP biosynthesis via de novo pathway; UDP from UMP (UMPK route): step 1/1. Its activity is regulated as follows. Inhibited by UTP. Functionally, catalyzes the reversible phosphorylation of UMP to UDP. In Mesorhizobium japonicum (strain LMG 29417 / CECT 9101 / MAFF 303099) (Mesorhizobium loti (strain MAFF 303099)), this protein is Uridylate kinase.